The following is a 373-amino-acid chain: Anhydro-N-acetylmuramic acid kinase (373 aa).

An ATP-binding site is contributed by 12-19 (GTSLDGVD).

This sequence belongs to the anhydro-N-acetylmuramic acid kinase family.

It carries out the reaction 1,6-anhydro-N-acetyl-beta-muramate + ATP + H2O = N-acetyl-D-muramate 6-phosphate + ADP + H(+). It functions in the pathway amino-sugar metabolism; 1,6-anhydro-N-acetylmuramate degradation. It participates in cell wall biogenesis; peptidoglycan recycling. Its function is as follows. Catalyzes the specific phosphorylation of 1,6-anhydro-N-acetylmuramic acid (anhMurNAc) with the simultaneous cleavage of the 1,6-anhydro ring, generating MurNAc-6-P. Is required for the utilization of anhMurNAc either imported from the medium or derived from its own cell wall murein, and thus plays a role in cell wall recycling. In Salmonella gallinarum (strain 287/91 / NCTC 13346), this protein is Anhydro-N-acetylmuramic acid kinase.